The sequence spans 446 residues: Exodeoxyribonuclease 7 large subunit (446 aa).

This sequence belongs to the XseA family. Heterooligomer composed of large and small subunits.

The protein resides in the cytoplasm. It carries out the reaction Exonucleolytic cleavage in either 5'- to 3'- or 3'- to 5'-direction to yield nucleoside 5'-phosphates.. Its function is as follows. Bidirectionally degrades single-stranded DNA into large acid-insoluble oligonucleotides, which are then degraded further into small acid-soluble oligonucleotides. The chain is Exodeoxyribonuclease 7 large subunit from Shewanella denitrificans (strain OS217 / ATCC BAA-1090 / DSM 15013).